A 541-amino-acid polypeptide reads, in one-letter code: Exopolysaccharide phosphotransferase SCO6021 (541 aa).

The protein belongs to the stealth family.

The protein is Exopolysaccharide phosphotransferase SCO6021 of Streptomyces coelicolor (strain ATCC BAA-471 / A3(2) / M145).